The following is a 65-amino-acid chain: Small ribosomal subunit protein bS21 (65 aa).

This sequence belongs to the bacterial ribosomal protein bS21 family.

The protein is Small ribosomal subunit protein bS21 of Trichlorobacter lovleyi (strain ATCC BAA-1151 / DSM 17278 / SZ) (Geobacter lovleyi).